The chain runs to 159 residues: Neuroglobin (159 aa).

The region spanning 3–151 (KLSEKDKELI…VVAAMSQGWA (149 aa)) is the Globin domain. Residues H66 and H98 each contribute to the heme b site.

It belongs to the globin family. In terms of assembly, monomer. Homodimers and homotetramers. Mainly monomeric but also detected as part of homodimers and homotetramers.

The protein localises to the cytoplasm. It localises to the cytosol. The protein resides in the mitochondrion matrix. The enzyme catalyses Fe(III)-heme b-[protein] + nitric oxide + H2O = Fe(II)-heme b-[protein] + nitrite + 2 H(+). In terms of biological role, monomeric globin with a bis-histidyl six-coordinate heme-iron atom through which it can bind dioxygen, carbon monoxide and nitric oxide. Could help transport oxygen and increase its availability to the metabolically active neuronal tissues, though its low quantity in tissues as well as its high affinity for dioxygen, which may limit its oxygen-releasing ability, argue against it. The ferrous/deoxygenated form exhibits a nitrite reductase activity and it could produce nitric oxide which in turn inhibits cellular respiration in response to hypoxia. In its ferrous/deoxygenated state, it may also exhibit GDI (Guanine nucleotide Dissociation Inhibitor) activity toward heterotrimeric G-alpha proteins, thereby regulating signal transduction to facilitate neuroprotective responses in the wake of hypoxia and associated oxidative stress. The sequence is that of Neuroglobin (ngb) from Dissostichus mawsoni (Antarctic cod).